The sequence spans 446 residues: Glutamine synthetase (446 aa).

Positions 18-103 (ENVRYLRLQF…LICDVYKTDG (86 aa)) constitute a GS beta-grasp domain. Residues 110–446 (PRANLKRVLK…WERDQYMKQY (337 aa)) form the GS catalytic domain. Residues Glu134 and Glu136 each contribute to the Mg(2+) site. Glu186 is a binding site for ATP. Mg(2+) is bound by residues Glu191 and Glu198. L-glutamate is bound by residues 242 to 243 (NG) and Gly243. Residue His247 coordinates Mg(2+). Ser251 is an ATP binding site. L-glutamate-binding residues include Arg300, Glu306, and Arg318. Residues Arg318 and Arg323 each contribute to the ATP site. Mg(2+) is bound at residue Glu335. An L-glutamate-binding site is contributed by Arg337.

The protein belongs to the glutamine synthetase family. As to quaternary structure, oligomer of 12 subunits arranged in the form of two hexagons. In its feedback-inhibited form, interacts with TnrA in order to block its DNA-binding activity. It depends on Mg(2+) as a cofactor.

It is found in the cytoplasm. The catalysed reaction is L-glutamate + NH4(+) + ATP = L-glutamine + ADP + phosphate + H(+). Inhibited by glutamine. In terms of biological role, glutamine synthetase (GS) is an unusual multitasking protein that functions as an enzyme, a transcription coregulator, and a chaperone in ammonium assimilation and in the regulation of genes involved in nitrogen metabolism. It catalyzes the ATP-dependent biosynthesis of glutamine from glutamate and ammonia. Feedback-inhibited GlnA also interacts with and regulates the activity of the transcriptional regulator TnrA. During nitrogen limitation, TnrA is in its DNA-binding active state and turns on the transcription of genes required for nitrogen assimilation. Under conditions of nitrogen excess, feedback-inhibited GlnA forms a stable complex with TnrA, which inhibits its DNA-binding activity. In contrast, feedback-inhibited GlnA acts as a chaperone to stabilize the DNA-binding activity of GlnR, which represses the transcription of nitrogen assimilation genes. This chain is Glutamine synthetase, found in Staphylococcus aureus (strain MSSA476).